The following is a 95-amino-acid chain: Alpha-defensin 20 (95 aa).

The signal sequence occupies residues 1–19 (MKTLVLLSALVLLAFQVQA). Residues 20–58 (DPIQNTDEETNTEEQPGEEDQAVSVSFGDPEGSALHEKS) constitute a propeptide that is removed on maturation. Positions 22–57 (IQNTDEETNTEEQPGEEDQAVSVSFGDPEGSALHEK) are disordered. Positions 25–40 (TDEETNTEEQPGEEDQ) are enriched in acidic residues. Disulfide bonds link cysteine 64–cysteine 89, cysteine 66–cysteine 81, and cysteine 71–cysteine 88.

It belongs to the alpha-defensin family.

It localises to the secreted. Functionally, may have microbicidal activities. This is Alpha-defensin 20 (Defa20) from Mus musculus (Mouse).